A 385-amino-acid chain; its full sequence is Multidrug export protein AcrE (385 aa).

The first 23 residues, 1–23 (MTKHARFFLLPSFILISAALIAG), serve as a signal peptide directing secretion. Cys24 carries the N-palmitoyl cysteine lipid modification. Cys24 carries the S-diacylglycerol cysteine lipid modification. Residues 366-385 (ARPGEQVKATTDTPADTASK) form a disordered region. The span at 373-385 (KATTDTPADTASK) shows a compositional bias: polar residues.

This sequence belongs to the membrane fusion protein (MFP) (TC 8.A.1) family. Part of the tripartite efflux system AcrEF-TolC, which is composed of an inner membrane transporter, AcrF, a periplasmic membrane fusion protein, AcrE, and an outer membrane component, TolC. The complex forms a large protein conduit and can translocate molecules across both the inner and outer membranes.

It localises to the cell inner membrane. Functionally, part of the tripartite efflux system AcrEF-TolC. Involved in the efflux of indole and organic solvents. The chain is Multidrug export protein AcrE (acrE) from Escherichia coli (strain K12).